The following is a 352-amino-acid chain: C5a anaphylatoxin chemotactic receptor 1 (352 aa).

The Extracellular portion of the chain corresponds to 1–38 (MASMNFSPPEYPDYGTATLDPNIFVDESLNTPKLSVPD). 2 positions are modified to sulfotyrosine: Tyr11 and Tyr14. The helical transmembrane segment at 39–65 (MIALVIFVMVFLVGVPGNFLVVWVTGF) threads the bilayer. Over 66-70 (EVRRT) the chain is Cytoplasmic. A helical membrane pass occupies residues 71-94 (INAIWFLNLAVADLLSCLALPILF). At 95 to 111 (SSIVQQGYWPFGNAACR) the chain is on the extracellular side. Cys110 and Cys189 form a disulfide bridge. The helical transmembrane segment at 112–133 (ILPSLILLNMYASILLLTTISA) threads the bilayer. At 134–154 (DRFVLVFNPIWCQNYRGPQLA) the chain is on the cytoplasmic side. Residues 155 to 175 (WAACSVAWAVALLLTVPSFIF) form a helical membrane-spanning segment. The Extracellular portion of the chain corresponds to 176–202 (RGVHTEYFPFWMTCGVDYSGVGVLVER). A helical transmembrane segment spans residues 203-228 (GVAILRLLMGFLGPLVILSICYTFLL). Residues 229–244 (IRTWSRKATRSTKTLK) are Cytoplasmic-facing. The chain crosses the membrane as a helical span at residues 245–267 (VVVAVVVSFFVLWLPYQVTGMMM). Residues 268–284 (ALFYKHSESFRRVSRLD) are Extracellular-facing. Residues 285-305 (SLCVAVAYINCCINPIIYVLA) traverse the membrane as a helical segment. Over 306–352 (AQGFHSRFLKSLPARLRQVLAEESVGRDSKSITLSTVDTPAQKSQGV) the chain is Cytoplasmic. Phosphoserine occurs at positions 316, 329, 334, 336, and 340.

This sequence belongs to the G-protein coupled receptor 1 family. As to quaternary structure, homodimer. May also form higher-order oligomers. Interacts (when phosphorylated) with ARRB1 and ARRB2; the interaction is associated with internalization of C5aR. Sulfation plays a critical role in the association of C5aR with C5a, but no significant role in the ability of the receptor to transduce a signal and mobilize calcium in response to a small peptide agonist. Post-translationally, phosphorylated on serine residues in response to C5a binding, resulting in internalization of the receptor and short-term desensitization to C5a.

The protein localises to the cell membrane. It is found in the cytoplasmic vesicle. Its function is as follows. Receptor for the chemotactic and inflammatory peptide anaphylatoxin C5a. The ligand interacts with at least two sites on the receptor: a high-affinity site on the extracellular N-terminus, and a second site in the transmembrane region which activates downstream signaling events. Receptor activation stimulates chemotaxis, granule enzyme release, intracellular calcium release and superoxide anion production. The protein is C5a anaphylatoxin chemotactic receptor 1 (C5AR1) of Canis lupus familiaris (Dog).